Here is a 207-residue protein sequence, read N- to C-terminus: 5-nitrosalicylic acid 1,2-dioxygenase (207 aa).

A Cupin type-2 domain is found at 85–151 (QLIHPGEEVT…GDKDTLMYVI (67 aa)).

The enzyme catalyses 5-nitrosalicylate + O2 = 2-oxo-3-(5-oxofuran-2-ylidene)propanoate + nitrite + H(+). Functionally, dioxygenase that catalyzes the cleavage of the aromatic ring of 5-nitrosalicylate (5NSA) without prior removal of the nitro group in biodegradation of 5-nitroanthranilate. The sequence is that of 5-nitrosalicylic acid 1,2-dioxygenase (naaB) from Bradyrhizobium sp.